We begin with the raw amino-acid sequence, 1076 residues long: Bifunctional glutamine synthetase adenylyltransferase/adenylyl-removing enzyme (1076 aa).

The interval 1–521 (MESSIFKPSS…LHLDIYYRPM (521 aa)) is adenylyl removase. An adenylyl transferase region spans residues 524–1076 (VNAQMENDQI…LERNRRRAQR (553 aa)). Low complexity predominate over residues 1042-1056 (TATASAATQQPQTAP). The tract at residues 1042–1076 (TATASAATQQPQTAPRPRMHVIAPRLERNRRRAQR) is disordered.

It belongs to the GlnE family. Requires Mg(2+) as cofactor.

It carries out the reaction [glutamine synthetase]-O(4)-(5'-adenylyl)-L-tyrosine + phosphate = [glutamine synthetase]-L-tyrosine + ADP. The catalysed reaction is [glutamine synthetase]-L-tyrosine + ATP = [glutamine synthetase]-O(4)-(5'-adenylyl)-L-tyrosine + diphosphate. Its function is as follows. Involved in the regulation of glutamine synthetase GlnA, a key enzyme in the process to assimilate ammonia. When cellular nitrogen levels are high, the C-terminal adenylyl transferase (AT) inactivates GlnA by covalent transfer of an adenylyl group from ATP to specific tyrosine residue of GlnA, thus reducing its activity. Conversely, when nitrogen levels are low, the N-terminal adenylyl removase (AR) activates GlnA by removing the adenylyl group by phosphorolysis, increasing its activity. The regulatory region of GlnE binds the signal transduction protein PII (GlnB) which indicates the nitrogen status of the cell. This Bifidobacterium longum (strain NCC 2705) protein is Bifunctional glutamine synthetase adenylyltransferase/adenylyl-removing enzyme.